A 395-amino-acid polypeptide reads, in one-letter code: GA-binding protein subunit beta-1 (395 aa).

Ser-2 bears the N-acetylserine mark. ANK repeat units follow at residues 5–34 and 37–66; these read DLGK…PFTT and LGTS…SRDA. Lys-69 is modified (N6-acetyllysine). ANK repeat units follow at residues 70–99, 103–132, and 136–166; these read VDRT…DVNA, LKMT…DVHT, and FCKT…QINT. Positions 258 to 327 are transcription activation and HCFC1 interaction; the sequence is DGAIQQVVSS…ETVISEEPPA (70 aa). An N6-acetyllysine mark is found at Lys-352 and Lys-381.

In terms of assembly, heterotetramer of two alpha and two beta subunits. Interacts with HCFC1, causing repression of transcriptional activity. In terms of processing, acetylated by EP300/p300. Deacetylated by SIRT7, promoting heterotetramerization and activity.

The protein resides in the nucleus. In terms of biological role, transcription factor capable of interacting with purine rich repeats (GA repeats). Acts as a master regulator of nuclear-encoded mitochondrial genes. Its function is as follows. (Microbial infection) Necessary for the expression of the Adenovirus E4 gene. This Homo sapiens (Human) protein is GA-binding protein subunit beta-1 (GABPB1).